Reading from the N-terminus, the 20-residue chain is 44 kDa cell wall protein 2 (20 aa).

It is found in the secreted. The protein resides in the cell wall. The protein is 44 kDa cell wall protein 2 of Solanum lycopersicum (Tomato).